A 321-amino-acid polypeptide reads, in one-letter code: Glucokinase (321 aa).

8–13 is an ATP binding site; sequence GDVGGT.

The protein belongs to the bacterial glucokinase family.

It is found in the cytoplasm. The catalysed reaction is D-glucose + ATP = D-glucose 6-phosphate + ADP + H(+). This Shigella sonnei (strain Ss046) protein is Glucokinase.